The chain runs to 89 residues: Small ribosomal subunit protein uS15 (89 aa).

It belongs to the universal ribosomal protein uS15 family. Part of the 30S ribosomal subunit. Forms a bridge to the 50S subunit in the 70S ribosome, contacting the 23S rRNA.

Its function is as follows. One of the primary rRNA binding proteins, it binds directly to 16S rRNA where it helps nucleate assembly of the platform of the 30S subunit by binding and bridging several RNA helices of the 16S rRNA. Forms an intersubunit bridge (bridge B4) with the 23S rRNA of the 50S subunit in the ribosome. The protein is Small ribosomal subunit protein uS15 of Lysinibacillus sphaericus (strain C3-41).